A 678-amino-acid polypeptide reads, in one-letter code: Pentatricopeptide repeat-containing protein At5g39980, chloroplastic (678 aa).

A chloroplast-targeting transit peptide spans 1 to 64 (MYIEIASSSS…NKKVWRKQPE (64 aa)). PPR repeat units lie at residues 154-188 (SVFAYNVVLRNVLRAKQFDIAHGLFDEMRQRALAP), 189-223 (DRYTYSTLITSFGKEGMFDSALSWLQKMEQDRVSG), 224-258 (DLVLYSNLIELSRRLCDYSKAISIFSRLKRSGITP), 259-293 (DLVAYNSMINVYGKAKLFREARLLIKEMNEAGVLP), 294-328 (NTVSYSTLLSVYVENHKFLEALSVFAEMKEVNCAL), 329-363 (DLTTCNIMIDVYGQLDMVKEADRLFWSLRKMDIEP), 364-398 (NVVSYNTILRVYGEAELFGEAIHLFRLMQRKDIEQ), 399-433 (NVVTYNTMIKIYGKTMEHEKATNLVQEMQSRGIEP), 434-468 (NAITYSTIISIWGKAGKLDRAATLFQKLRSSGVEI), 469-503 (DQVLYQTMIVAYERVGLMGHAKRLLHELKLPDNIP), 535-569 (DISVFGCMINLYSRNQRYVNVIEVFEKMRTAGYFP), 570-604 (DSNVIAMVLNAYGKQREFEKADTVYREMQEEGCVF), 605-638 (PDEVHFQMLSLYSSKKDFEMVESLFQRLESDPNV), and 639-674 (NSKELHLVVAALYERADKLNDASRVMNRMRERGILK).

It belongs to the PPR family. P subfamily.

The protein localises to the plastid. Its subcellular location is the chloroplast. This chain is Pentatricopeptide repeat-containing protein At5g39980, chloroplastic, found in Arabidopsis thaliana (Mouse-ear cress).